A 338-amino-acid chain; its full sequence is Ketol-acid reductoisomerase (NADP(+)) (338 aa).

The region spanning 1–181 (MKVYYDKDAD…GGTKGGVIET (181 aa)) is the KARI N-terminal Rossmann domain. Residues 24–27 (YGSQ), Arg47, and Ser52 each bind NADP(+). His107 is an active-site residue. Gly133 is a binding site for NADP(+). Positions 182–327 (NFREETETDL…GQLRDMMPWI (146 aa)) constitute a KARI C-terminal knotted domain. Mg(2+) is bound by residues Asp190, Glu194, Glu226, and Glu230. Position 251 (Ser251) interacts with substrate.

It belongs to the ketol-acid reductoisomerase family. The cofactor is Mg(2+).

It carries out the reaction (2R)-2,3-dihydroxy-3-methylbutanoate + NADP(+) = (2S)-2-acetolactate + NADPH + H(+). It catalyses the reaction (2R,3R)-2,3-dihydroxy-3-methylpentanoate + NADP(+) = (S)-2-ethyl-2-hydroxy-3-oxobutanoate + NADPH + H(+). Its pathway is amino-acid biosynthesis; L-isoleucine biosynthesis; L-isoleucine from 2-oxobutanoate: step 2/4. It functions in the pathway amino-acid biosynthesis; L-valine biosynthesis; L-valine from pyruvate: step 2/4. Involved in the biosynthesis of branched-chain amino acids (BCAA). Catalyzes an alkyl-migration followed by a ketol-acid reduction of (S)-2-acetolactate (S2AL) to yield (R)-2,3-dihydroxy-isovalerate. In the isomerase reaction, S2AL is rearranged via a Mg-dependent methyl migration to produce 3-hydroxy-3-methyl-2-ketobutyrate (HMKB). In the reductase reaction, this 2-ketoacid undergoes a metal-dependent reduction by NADPH to yield (R)-2,3-dihydroxy-isovalerate. The protein is Ketol-acid reductoisomerase (NADP(+)) of Dechloromonas aromatica (strain RCB).